Reading from the N-terminus, the 383-residue chain is MSPNPSNSLDAFAGEKLAGLEASALRRRLAVTARGPEAAAERGGRSLVSFSCNDYLGLAHDPRVIAAATEALARYGAGAGASRLVTGNSPPLAALEERLARHKGKEAALVFGSGYLANLGIAPALVGAGDLILIDELGHSCLFAGAAMSRAQTVRFAHNDVAQLRALLAEHRGTARRALILTERVFSMDGDRAPLPEILALAGEYDAWTLVDDAHGLGVVEPGQRAPLEMGTLSKTLGSYGGYLCASQPVIDLLTSRARSLVYTTGLPPASAAAALKALDIVETEPERAARPLALARRFTARLGLPEAMSPIVPVLIGAAEAALALSTALEARGFLVVAIRPPTVAPGTARLRVAFSAAHDEGQVDALAEALIELAPESVRAG.

Positions 27 and 34 each coordinate substrate. Position 114–115 (114–115 (GY)) interacts with pyridoxal 5'-phosphate. Position 139 (histidine 139) interacts with substrate. Pyridoxal 5'-phosphate-binding positions include serine 187, 212–215 (DDAH), and 232–235 (TLSK). The residue at position 235 (lysine 235) is an N6-(pyridoxal phosphate)lysine. Threonine 344 contacts substrate.

This sequence belongs to the class-II pyridoxal-phosphate-dependent aminotransferase family. BioF subfamily. Homodimer. Requires pyridoxal 5'-phosphate as cofactor.

The enzyme catalyses 6-carboxyhexanoyl-[ACP] + L-alanine + H(+) = (8S)-8-amino-7-oxononanoate + holo-[ACP] + CO2. It functions in the pathway cofactor biosynthesis; biotin biosynthesis. In terms of biological role, catalyzes the decarboxylative condensation of pimeloyl-[acyl-carrier protein] and L-alanine to produce 8-amino-7-oxononanoate (AON), [acyl-carrier protein], and carbon dioxide. The chain is 8-amino-7-oxononanoate synthase from Methylorubrum extorquens (strain CM4 / NCIMB 13688) (Methylobacterium extorquens).